A 295-amino-acid chain; its full sequence is Ethanolamine ammonia-lyase small subunit (295 aa).

Positions 207, 228, and 258 each coordinate adenosylcob(III)alamin.

This sequence belongs to the EutC family. As to quaternary structure, the basic unit is a heterodimer which dimerizes to form tetramers. The heterotetramers trimerize; 6 large subunits form a core ring with 6 small subunits projecting outwards. Adenosylcob(III)alamin is required as a cofactor.

The protein resides in the bacterial microcompartment. It carries out the reaction ethanolamine = acetaldehyde + NH4(+). Its pathway is amine and polyamine degradation; ethanolamine degradation. Functionally, catalyzes the deamination of various vicinal amino-alcohols to oxo compounds. Allows this organism to utilize ethanolamine as the sole source of nitrogen and carbon in the presence of external vitamin B12. The protein is Ethanolamine ammonia-lyase small subunit of Escherichia coli O157:H7.